The chain runs to 68 residues: MEC1-mediated checkpoint protein HUG1 (68 aa).

The protein resides in the cytoplasm. It localises to the nucleus. In terms of biological role, involved in the MEC1-mediated checkpoint response to DNA damage and replication arrest. In Saccharomyces cerevisiae (strain ATCC 204508 / S288c) (Baker's yeast), this protein is MEC1-mediated checkpoint protein HUG1 (HUG1).